A 215-amino-acid chain; its full sequence is Cytochrome b6 (215 aa).

The helical transmembrane segment at 32–52 (IFYCLGGITLVCFLIQFATGF) threads the bilayer. Cys35 serves as a coordination point for heme c. Heme b is bound by residues His86 and His100. A run of 3 helical transmembrane segments spans residues 90–110 (ASMMVLMMILHVFRVYLTGGF), 116–136 (LTWVSGVILAVITVSFGVTGY), and 186–206 (AHTFVLPWLIAVFMLFHFLMI). Heme b is bound by residues His187 and His202.

The protein belongs to the cytochrome b family. PetB subfamily. As to quaternary structure, the 4 large subunits of the cytochrome b6-f complex are cytochrome b6, subunit IV (17 kDa polypeptide, PetD), cytochrome f and the Rieske protein, while the 4 small subunits are PetG, PetL, PetM and PetN. The complex functions as a dimer. Heme b is required as a cofactor. It depends on heme c as a cofactor.

The protein localises to the cellular thylakoid membrane. In terms of biological role, component of the cytochrome b6-f complex, which mediates electron transfer between photosystem II (PSII) and photosystem I (PSI), cyclic electron flow around PSI, and state transitions. This is Cytochrome b6 from Nostoc punctiforme (strain ATCC 29133 / PCC 73102).